The chain runs to 542 residues: 4-coumarate--CoA ligase-like 1 (542 aa).

Ser189, Ser190, Gly191, Thr192, Thr193, and Lys197 together coordinate ATP. Position 237 (Tyr237) interacts with (E)-4-coumaroyl-AMP. Arg258 contacts CoA. The tract at residues 260–331 (DLRIFLNALI…AKFPNVQVQE (72 aa)) is SBD1. Residues Ala309, Glu331, Ala332, and Thr336 each coordinate (E)-4-coumaroyl-AMP. Residues Glu331, Ala332, Thr336, Asp420, and Arg435 each contribute to the ATP site. Positions 332 to 399 (AYGLTEHSCI…VRSQCVMQGY (68 aa)) are SBD2. (E)-4-coumaroyl-AMP contacts are provided by Lys437 and Lys441. Residues Lys443 and Gly444 each coordinate CoA. Lys526 is a binding site for ATP.

The protein belongs to the ATP-dependent AMP-binding enzyme family. In terms of assembly, interacts with TKPR1, PKSA and PKSB. Mg(2+) serves as cofactor. As to expression, mostly confined to anther tapetal cells.

It localises to the endoplasmic reticulum. It catalyses the reaction (E)-4-coumarate + ATP + CoA = (E)-4-coumaroyl-CoA + AMP + diphosphate. It carries out the reaction (E)-4-coumarate + ATP + H(+) = (E)-4-coumaroyl-AMP + diphosphate. The enzyme catalyses (E)-4-coumaroyl-AMP + CoA = (E)-4-coumaroyl-CoA + AMP + H(+). Carboxylate--CoA ligase that may use 4-coumarate as substrate. Follows a two-step reaction mechanism, wherein the carboxylate substrate first undergoes adenylation by ATP, followed by a thioesterification in the presence of CoA to yield the final CoA thioester. The polypeptide is 4-coumarate--CoA ligase-like 1 (Arabidopsis thaliana (Mouse-ear cress)).